The primary structure comprises 84 residues: Large ribosomal subunit protein bL27 (84 aa).

Residues 1–21 (MAHKKGGGSTKNGRDSNPQYL) are disordered.

Belongs to the bacterial ribosomal protein bL27 family.

The sequence is that of Large ribosomal subunit protein bL27 from Chloroherpeton thalassium (strain ATCC 35110 / GB-78).